The sequence spans 160 residues: 6,7-dimethyl-8-ribityllumazine synthase (160 aa).

5-amino-6-(D-ribitylamino)uracil is bound by residues F22, 57-59, and 81-83; these read AVE and AVI. (2S)-2-hydroxy-3-oxobutyl phosphate is bound at residue 86–87; the sequence is GT. Residue H89 is the Proton donor of the active site. F114 is a 5-amino-6-(D-ribitylamino)uracil binding site. R128 lines the (2S)-2-hydroxy-3-oxobutyl phosphate pocket.

It belongs to the DMRL synthase family. Forms an icosahedral capsid composed of 60 subunits, arranged as a dodecamer of pentamers.

The enzyme catalyses (2S)-2-hydroxy-3-oxobutyl phosphate + 5-amino-6-(D-ribitylamino)uracil = 6,7-dimethyl-8-(1-D-ribityl)lumazine + phosphate + 2 H2O + H(+). Its pathway is cofactor biosynthesis; riboflavin biosynthesis; riboflavin from 2-hydroxy-3-oxobutyl phosphate and 5-amino-6-(D-ribitylamino)uracil: step 1/2. In terms of biological role, catalyzes the formation of 6,7-dimethyl-8-ribityllumazine by condensation of 5-amino-6-(D-ribitylamino)uracil with 3,4-dihydroxy-2-butanone 4-phosphate. This is the penultimate step in the biosynthesis of riboflavin. This is 6,7-dimethyl-8-ribityllumazine synthase from Shewanella sediminis (strain HAW-EB3).